The chain runs to 1177 residues: DNA-directed RNA polymerase subunit beta (1177 aa).

Residues 1 to 36 form a disordered region; it reads MEGCILADSRQSKTAASPSPSRPQSSSNNSVPGAPN. The segment covering 17–32 has biased composition (low complexity); the sequence is SPSPSRPQSSSNNSVP.

This sequence belongs to the RNA polymerase beta chain family. In terms of assembly, the RNAP catalytic core consists of 2 alpha, 1 beta, 1 beta' and 1 omega subunit. When a sigma factor is associated with the core the holoenzyme is formed, which can initiate transcription.

The catalysed reaction is RNA(n) + a ribonucleoside 5'-triphosphate = RNA(n+1) + diphosphate. Functionally, DNA-dependent RNA polymerase catalyzes the transcription of DNA into RNA using the four ribonucleoside triphosphates as substrates. This Mycobacterium tuberculosis (strain ATCC 25177 / H37Ra) protein is DNA-directed RNA polymerase subunit beta.